Here is a 263-residue protein sequence, read N- to C-terminus: Purine nucleoside phosphorylase SE_0862 (263 aa).

Zn(2+) contacts are provided by H79, C124, and H141.

This sequence belongs to the purine nucleoside phosphorylase YfiH/LACC1 family. As to quaternary structure, homodimer. It depends on Cu(2+) as a cofactor. The cofactor is Zn(2+).

The enzyme catalyses adenosine + phosphate = alpha-D-ribose 1-phosphate + adenine. It catalyses the reaction S-methyl-5'-thioadenosine + phosphate = 5-(methylsulfanyl)-alpha-D-ribose 1-phosphate + adenine. The catalysed reaction is inosine + phosphate = alpha-D-ribose 1-phosphate + hypoxanthine. It carries out the reaction adenosine + H2O + H(+) = inosine + NH4(+). Functionally, purine nucleoside enzyme that catalyzes the phosphorolysis of adenosine and inosine nucleosides, yielding D-ribose 1-phosphate and the respective free bases, adenine and hypoxanthine. Also catalyzes the phosphorolysis of S-methyl-5'-thioadenosine into adenine and S-methyl-5-thio-alpha-D-ribose 1-phosphate. Also has adenosine deaminase activity. The chain is Purine nucleoside phosphorylase SE_0862 from Staphylococcus epidermidis (strain ATCC 12228 / FDA PCI 1200).